The following is a 372-amino-acid chain: MTKHRVVVGLSGGVDSAVTAHLLKQQGHEVVGIFMKNWEDDDDSEYCSSNVDFVDAAAVADVVGIEIEHVNFASEYKDRVFAEFLREYQAGRTPNPDVLCNAEIKFKAFLDHAMRLGAEKIATGHYARVRQNPDTQLFELLKGLDPAKDQSYFLHRLNQAQLSRSMFPVGELKKTEVRRIAEEIGLPNAKKKDSTGICFIGERPFRDFLNRYISKEPGNILDDRNRKLGKHVGLSFYTLGQRSGLGIGGVKEKGAPRGGGDHDPWFVARKELDTNTLRVVQGHDHPWLLSQSLLADQVSWVAGHAPAEGKAYGSKTRYRQPDSPALISGATPEGFRLDFPEPQWAVTPGQSAVLYDGDVCLGGGIIAAVDPH.

ATP contacts are provided by residues 9–16 and Met-35; that span reads GLSGGVDS. The interval 95-97 is interaction with target base in tRNA; the sequence is NPD. The active-site Nucleophile is Cys-100. The cysteines at positions 100 and 198 are disulfide-linked. Residue Gly-124 coordinates ATP. The tract at residues 148 to 150 is interaction with tRNA; sequence KDQ. The active-site Cysteine persulfide intermediate is the Cys-198. Residues 317-318 form an interaction with tRNA region; that stretch reads RY.

It belongs to the MnmA/TRMU family.

The protein resides in the cytoplasm. The catalysed reaction is S-sulfanyl-L-cysteinyl-[protein] + uridine(34) in tRNA + AH2 + ATP = 2-thiouridine(34) in tRNA + L-cysteinyl-[protein] + A + AMP + diphosphate + H(+). Catalyzes the 2-thiolation of uridine at the wobble position (U34) of tRNA, leading to the formation of s(2)U34. This is tRNA-specific 2-thiouridylase MnmA from Delftia acidovorans (strain DSM 14801 / SPH-1).